The primary structure comprises 639 residues: Poly(A)-specific ribonuclease PARN (639 aa).

D28 and E30 together coordinate a divalent metal cation. A phosphoserine mark is found at S163 and S167. In terms of domain architecture, R3H spans 178–245; that stretch reads KKFIDQVVEK…ERYIVISKVD (68 aa). K220 is subject to N6-acetyllysine. Positions 292 and 382 each coordinate a divalent metal cation. K499 carries the post-translational modification N6-acetyllysine. At S530 the chain carries Phosphoserine. S557 bears the Phosphoserine; by MAPKAPK2 mark. The segment at 560–639 is disordered; sequence APSTVGKRNL…ATLFEVPDTW (80 aa). Phosphoserine occurs at positions 583 and 587. Over residues 606 to 615 the composition is skewed to basic residues; the sequence is KKAKKLKRMK. A phosphoserine mark is found at S619, S623, and S628. Residue T631 is modified to Phosphothreonine.

It belongs to the CAF1 family. As to quaternary structure, homodimer. Found in a mRNA decay complex with RENT1, RENT2 and RENT3B. Interacts with KHSRP. Interacts with CELF1/CUGBP1. Interacts with ZC3HAV1 in an RNA-independent manner. Interacts with DHX36. The cofactor is Mg(2+). Phosphorylation by MAPKAPK2, preventing GADD45A mRNA degradation after genotoxic stress. Ubiquitous.

Its subcellular location is the nucleus. It is found in the cytoplasm. The protein resides in the nucleolus. It catalyses the reaction Exonucleolytic cleavage of poly(A) to 5'-AMP.. 3'-exoribonuclease that has a preference for poly(A) tails of mRNAs, thereby efficiently degrading poly(A) tails. Exonucleolytic degradation of the poly(A) tail is often the first step in the decay of eukaryotic mRNAs and is also used to silence certain maternal mRNAs translationally during oocyte maturation and early embryonic development. Interacts with both the 3'-end poly(A) tail and the 5'-end cap structure during degradation, the interaction with the cap structure being required for an efficient degradation of poly(A) tails. Involved in nonsense-mediated mRNA decay, a critical process of selective degradation of mRNAs that contain premature stop codons. Also involved in degradation of inherently unstable mRNAs that contain AU-rich elements (AREs) in their 3'-UTR, possibly via its interaction with KHSRP. Probably mediates the removal of poly(A) tails of AREs mRNAs, which constitutes the first step of destabilization. Also able to recognize and trim poly(A) tails of microRNAs such as MIR21 and H/ACA box snoRNAs (small nucleolar RNAs) leading to microRNAs degradation or snoRNA increased stability. This Homo sapiens (Human) protein is Poly(A)-specific ribonuclease PARN (PARN).